Consider the following 102-residue polypeptide: NADH-quinone oxidoreductase subunit K (102 aa).

3 helical membrane-spanning segments follow: residues 5–25 (ITHY…GIFL), 31–51 (IIIL…FVAF), and 66–86 (FVLT…VVFF).

This sequence belongs to the complex I subunit 4L family. NDH-1 is composed of 14 different subunits. Subunits NuoA, H, J, K, L, M, N constitute the membrane sector of the complex.

Its subcellular location is the cell inner membrane. The enzyme catalyses a quinone + NADH + 5 H(+)(in) = a quinol + NAD(+) + 4 H(+)(out). Functionally, NDH-1 shuttles electrons from NADH, via FMN and iron-sulfur (Fe-S) centers, to quinones in the respiratory chain. The immediate electron acceptor for the enzyme in this species is believed to be ubiquinone. Couples the redox reaction to proton translocation (for every two electrons transferred, four hydrogen ions are translocated across the cytoplasmic membrane), and thus conserves the redox energy in a proton gradient. The polypeptide is NADH-quinone oxidoreductase subunit K (Bartonella tribocorum (strain CIP 105476 / IBS 506)).